The chain runs to 103 residues: U-scoloptoxin(24)-Er1a (103 aa).

The first 23 residues, 1-23, serve as a signal peptide directing secretion; the sequence is MVKSLHCLIGIVLFLAILNAGNG.

This sequence belongs to the scoloptoxin-24 family. In terms of processing, contains 1 disulfide bond. In terms of tissue distribution, expressed by the venom gland.

The protein localises to the secreted. This chain is U-scoloptoxin(24)-Er1a, found in Ethmostigmus rubripes (Giant centipede).